A 172-amino-acid polypeptide reads, in one-letter code: 3-hydroxydecanoyl-[acyl-carrier-protein] dehydratase (172 aa).

The active site involves histidine 71.

The protein belongs to the thioester dehydratase family. FabA subfamily. Homodimer.

Its subcellular location is the cytoplasm. It catalyses the reaction a (3R)-hydroxyacyl-[ACP] = a (2E)-enoyl-[ACP] + H2O. The enzyme catalyses (3R)-hydroxydecanoyl-[ACP] = (2E)-decenoyl-[ACP] + H2O. It carries out the reaction (2E)-decenoyl-[ACP] = (3Z)-decenoyl-[ACP]. Its pathway is lipid metabolism; fatty acid biosynthesis. In terms of biological role, necessary for the introduction of cis unsaturation into fatty acids. Catalyzes the dehydration of (3R)-3-hydroxydecanoyl-ACP to E-(2)-decenoyl-ACP and then its isomerization to Z-(3)-decenoyl-ACP. Can catalyze the dehydratase reaction for beta-hydroxyacyl-ACPs with saturated chain lengths up to 16:0, being most active on intermediate chain length. This is 3-hydroxydecanoyl-[acyl-carrier-protein] dehydratase from Erwinia tasmaniensis (strain DSM 17950 / CFBP 7177 / CIP 109463 / NCPPB 4357 / Et1/99).